Consider the following 238-residue polypeptide: Ribonuclease PH (238 aa).

Phosphate-binding positions include arginine 86 and 124–126 (GTR).

Belongs to the RNase PH family. Homohexameric ring arranged as a trimer of dimers.

It carries out the reaction tRNA(n+1) + phosphate = tRNA(n) + a ribonucleoside 5'-diphosphate. Functionally, phosphorolytic 3'-5' exoribonuclease that plays an important role in tRNA 3'-end maturation. Removes nucleotide residues following the 3'-CCA terminus of tRNAs; can also add nucleotides to the ends of RNA molecules by using nucleoside diphosphates as substrates, but this may not be physiologically important. Probably plays a role in initiation of 16S rRNA degradation (leading to ribosome degradation) during starvation. This Trichlorobacter lovleyi (strain ATCC BAA-1151 / DSM 17278 / SZ) (Geobacter lovleyi) protein is Ribonuclease PH.